The sequence spans 195 residues: Guanylate kinase (195 aa).

In terms of domain architecture, Guanylate kinase-like spans 7-186 (GVLLVLSSPS…SVEEISSILD (180 aa)). Residue 14–21 (SPSGAGKT) coordinates ATP.

The protein belongs to the guanylate kinase family.

The protein localises to the cytoplasm. The catalysed reaction is GMP + ATP = GDP + ADP. Functionally, essential for recycling GMP and indirectly, cGMP. The chain is Guanylate kinase from Wolbachia sp. subsp. Brugia malayi (strain TRS).